A 480-amino-acid chain; its full sequence is Protein nucleotidyltransferase YdiU (480 aa).

Residues glycine 86, glycine 88, arginine 89, lysine 109, aspartate 121, glycine 122, arginine 172, and arginine 179 each coordinate ATP. Aspartate 248 acts as the Proton acceptor in catalysis. 2 residues coordinate Mg(2+): asparagine 249 and aspartate 258. Aspartate 258 is a binding site for ATP.

This sequence belongs to the SELO family. The cofactor is Mg(2+). Mn(2+) is required as a cofactor.

The catalysed reaction is L-seryl-[protein] + ATP = 3-O-(5'-adenylyl)-L-seryl-[protein] + diphosphate. It carries out the reaction L-threonyl-[protein] + ATP = 3-O-(5'-adenylyl)-L-threonyl-[protein] + diphosphate. It catalyses the reaction L-tyrosyl-[protein] + ATP = O-(5'-adenylyl)-L-tyrosyl-[protein] + diphosphate. The enzyme catalyses L-histidyl-[protein] + UTP = N(tele)-(5'-uridylyl)-L-histidyl-[protein] + diphosphate. The catalysed reaction is L-seryl-[protein] + UTP = O-(5'-uridylyl)-L-seryl-[protein] + diphosphate. It carries out the reaction L-tyrosyl-[protein] + UTP = O-(5'-uridylyl)-L-tyrosyl-[protein] + diphosphate. Its function is as follows. Nucleotidyltransferase involved in the post-translational modification of proteins. It can catalyze the addition of adenosine monophosphate (AMP) or uridine monophosphate (UMP) to a protein, resulting in modifications known as AMPylation and UMPylation. The protein is Protein nucleotidyltransferase YdiU of Salmonella schwarzengrund (strain CVM19633).